Here is a 102-residue protein sequence, read N- to C-terminus: Small ribosomal subunit protein eS24 (102 aa).

Belongs to the eukaryotic ribosomal protein eS24 family.

This chain is Small ribosomal subunit protein eS24 (rps24e), found in Haloarcula marismortui (strain ATCC 43049 / DSM 3752 / JCM 8966 / VKM B-1809) (Halobacterium marismortui).